We begin with the raw amino-acid sequence, 215 residues long: Glutathione S-transferase stcT (215 aa).

The GST N-terminal domain maps to 2 to 82 (PFGTLYTRPF…YDSNTTLLGT (81 aa)). Glutathione contacts are provided by Lys52 and Glu66. A substrate-binding site is contributed by Lys52. The GST C-terminal domain occupies 83-211 (TGQEYASIIR…PVLAEYEMPI (129 aa)).

The protein belongs to the GST superfamily. Glutathione serves as cofactor.

It participates in mycotoxin biosynthesis; sterigmatocystin biosynthesis. Functionally, glutathione S-transferase; part of the gene cluster that mediates the biosynthesis of sterigmatocystin (ST), a polyketide-derived furanocoumarin which is part of the most toxic and carcinogenic compounds among the known mycotoxins. The first step in the biosynthesis of sterigmatocystin is the production of hexanoate by the fatty acid synthase (FAS) units stcJ and stcK. The polyketide backbone is assembled by the non-reducing polyketide synthase stcA by condensation of the starter hexanoyl-CoA and 7 malonyl-CoA extender units followed by cyclization and release of norsolorinic acid. Norsolorinic acid is the first stable intermediate in the biosynthesis of sterigmatocystin and is converted into averantin (AVN) by the ketoreductase stcE which reduces the hexanoate ketone to an alcohol. Averantin is then oxidized into 5'-hydroxyaverantin (HAVN) by the cytochrome P450 monooxygenase stcF. 5'-hydroxyaverantin is further converted to 5'-oxyaverantin (OAVN) by the 5'-hydroxyaverantin dehydrogenase stcG. The next step is the conversion of OAVN into averufin (AVF) which is catalyzed by a yet to be identified enzyme. The cytochrome P450 monooxygenase stcB and the flavin-binding monooxygenase stcW are both required for the conversion of averufin to 1-hydroxyversicolorone. The esterase stcI probably catalyzes the formation of versiconal hemiacetal acetate from 1-hydroxyversicolorone. The oxydoreductase stcN then probably catalyzes the biosynthetic step from versiconal to versicolorin B (VERB). The next step is performed by the versicolorin B desaturase stcL to produce versicolorin A (VERA). The ketoreductase stcU and the cytochrome P450 monooxygenase stcS are involved in the conversion of versicolorin A to demethylsterigmatocystin. The Baeyer-Villiger oxidas stcQ and the reductase stcR might be involved in the biosynthetic step from versicolorin A to demethylsterigmatocystin. The final step in the biosynthesis of sterigmatocystin is the methylation of demethylsterigmatocystin catalyzed by the methyltransferase stcP. This chain is Glutathione S-transferase stcT, found in Emericella nidulans (strain FGSC A4 / ATCC 38163 / CBS 112.46 / NRRL 194 / M139) (Aspergillus nidulans).